A 145-amino-acid polypeptide reads, in one-letter code: MTYWICITNRENWEVIKRHNVWGVPKKHKNTLSRVKPGDKLVIYVRQEKDKEGNLLEPKIVGIYEVTSEPYVDFSRIFKPHRGGKETYPYRVKIKPIKIGEINFKPLINDLKFIKNKKRWSMHFFGKAMRELPEEDYKLIEKLLL.

Belongs to the UPF0310 family.

The chain is UPF0310 protein PH1033 from Pyrococcus horikoshii (strain ATCC 700860 / DSM 12428 / JCM 9974 / NBRC 100139 / OT-3).